The sequence spans 439 residues: Adenylosuccinate synthetase (439 aa).

Residues 25-31 (GDEGKGK), 53-55 (GHT), and Lys-62 contribute to the GTP site. Asp-26 serves as the catalytic Proton acceptor. 2 residues coordinate Mg(2+): Asp-26 and Gly-53. IMP is bound by residues 26–29 (DEGK) and 51–54 (NAGH). His-54 functions as the Proton donor in the catalytic mechanism. IMP is bound by residues Thr-141, Arg-155, Asn-232, and Thr-247. Residue Thr-307 coordinates GTP. Residue 307 to 313 (TTTNRPR) participates in substrate binding. Residue Arg-311 participates in IMP binding. GTP contacts are provided by residues Arg-313, 339–341 (KLD), and 425–427 (GVG).

The protein belongs to the adenylosuccinate synthetase family. Homodimer. Mg(2+) serves as cofactor.

The protein localises to the cytoplasm. The catalysed reaction is IMP + L-aspartate + GTP = N(6)-(1,2-dicarboxyethyl)-AMP + GDP + phosphate + 2 H(+). It participates in purine metabolism; AMP biosynthesis via de novo pathway; AMP from IMP: step 1/2. Plays an important role in the salvage pathway for purine nucleotide biosynthesis. Catalyzes the first committed step in the biosynthesis of AMP from IMP. This Plasmodium yoelii yoelii protein is Adenylosuccinate synthetase.